Consider the following 448-residue polypeptide: Signal recognition particle 54 kDa protein (448 aa).

Residues 107–114 (GIQGSGKT), 189–193 (DSAGR), and 247–250 (TKLD) contribute to the GTP site.

Belongs to the GTP-binding SRP family. SRP54 subfamily. Part of the signal recognition particle protein translocation system, which is composed of SRP and FtsY. Archaeal SRP consists of a 7S RNA molecule of 300 nucleotides and two protein subunits: SRP54 and SRP19.

The protein resides in the cytoplasm. It catalyses the reaction GTP + H2O = GDP + phosphate + H(+). Its function is as follows. Involved in targeting and insertion of nascent membrane proteins into the cytoplasmic membrane. Binds to the hydrophobic signal sequence of the ribosome-nascent chain (RNC) as it emerges from the ribosomes. The SRP-RNC complex is then targeted to the cytoplasmic membrane where it interacts with the SRP receptor FtsY. The sequence is that of Signal recognition particle 54 kDa protein from Thermococcus onnurineus (strain NA1).